Consider the following 211-residue polypeptide: Probable GTP-binding protein EngB (211 aa).

The region spanning 26–200 (SGIEVAFAGR…RQKLDNWFST (175 aa)) is the EngB-type G domain. Residues 34–41 (GRSNAGKS), 61–65 (GRTQL), 79–82 (DLPG), 146–149 (TKAD), and 179–181 (FSS) each bind GTP. Ser-41 and Thr-63 together coordinate Mg(2+).

The protein belongs to the TRAFAC class TrmE-Era-EngA-EngB-Septin-like GTPase superfamily. EngB GTPase family. Mg(2+) is required as a cofactor.

Functionally, necessary for normal cell division and for the maintenance of normal septation. This is Probable GTP-binding protein EngB from Pectobacterium carotovorum subsp. carotovorum (strain PC1).